Consider the following 139-residue polypeptide: ATP synthase epsilon chain (139 aa).

The protein belongs to the ATPase epsilon chain family. In terms of assembly, F-type ATPases have 2 components, CF(1) - the catalytic core - and CF(0) - the membrane proton channel. CF(1) has five subunits: alpha(3), beta(3), gamma(1), delta(1), epsilon(1). CF(0) has three main subunits: a, b and c.

The protein localises to the cell inner membrane. In terms of biological role, produces ATP from ADP in the presence of a proton gradient across the membrane. This chain is ATP synthase epsilon chain, found in Actinobacillus pleuropneumoniae serotype 5b (strain L20).